The sequence spans 796 residues: YY1-associated protein 1 (796 aa).

2 disordered regions span residues 1-45 and 463-488; these read MEEE…ATPS and IQPS…SEAP. Basic and acidic residues predominate over residues 23–36; that stretch reads PPDKREGSAVDPGK. Residues 463–472 show a composition bias toward low complexity; that stretch reads IQPSPSLQPS. Polar residues predominate over residues 473 to 485; that stretch reads FNPGKTPAQSTHS. Serine 724 is subject to Phosphoserine. Residues 755 to 776 form a disordered region; it reads RQALEPLPQGIQESLNNSSPGD. Positions 765–774 are enriched in polar residues; it reads IQESLNNSSP.

Interacts with YY1. Interacts with MAD2L2. Interacts with INO80. In terms of tissue distribution, ubiquitous. Detected in small intestine, skeletal muscle, lung, pancreas, brain, stomach, spleen, colon and heart. Detected at very low levels in healthy liver. Highly expressed in most liver carcinomas.

The protein resides in the cytoplasm. The protein localises to the nucleus. Its subcellular location is the nucleoplasm. It localises to the nucleolus. Its function is as follows. Associates with the INO80 chromatin remodeling complex, which is responsible for transcriptional regulation, DNA repair, and replication. Enhances transcription activation by YY1. Plays a role in cell cycle regulation. The polypeptide is YY1-associated protein 1 (Homo sapiens (Human)).